We begin with the raw amino-acid sequence, 347 residues long: DNA-directed RNA polymerase subunit alpha (347 aa).

Residues 1 to 226 (MLISQRPTLS…ELFGLARELN (226 aa)) form an alpha N-terminal domain (alpha-NTD) region. The alpha C-terminal domain (alpha-CTD) stretch occupies residues 243–347 (HIASFALPID…EQDYAETEQL (105 aa)).

It belongs to the RNA polymerase alpha chain family. Homodimer. The RNAP catalytic core consists of 2 alpha, 1 beta, 1 beta' and 1 omega subunit. When a sigma factor is associated with the core the holoenzyme is formed, which can initiate transcription.

It catalyses the reaction RNA(n) + a ribonucleoside 5'-triphosphate = RNA(n+1) + diphosphate. DNA-dependent RNA polymerase catalyzes the transcription of DNA into RNA using the four ribonucleoside triphosphates as substrates. This chain is DNA-directed RNA polymerase subunit alpha, found in Mycobacterium bovis (strain ATCC BAA-935 / AF2122/97).